The chain runs to 1256 residues: Splicing factor, arginine/serine-rich 19 (1256 aa).

6 disordered regions span residues 1 to 33 (MEEEDESRGKTEESGEDRGDGPPDRDPALSPSA), 158 to 343 (GKTV…APRR), 371 to 395 (ALSLPPLPPTDPEIEEGEIVQPEEE), 408 to 1030 (PRQP…TLPP), 1112 to 1152 (GSLP…DKYL), and 1221 to 1256 (FRKHGRKPGDPPGPPRPPKEPGPPDKGGPGLPLPPL). A compositionally biased stretch (basic and acidic residues) spans 7-27 (SRGKTEESGEDRGDGPPDRDP). Residues 192 to 206 (SSASSSPSPSPSSSS) show a composition bias toward low complexity. Over residues 207-222 (PSPPPPPPPPPPPALP) the composition is skewed to pro residues. Over residues 227-236 (DIYDPFHPTD) the composition is skewed to basic and acidic residues. Serine 240 carries the phosphoserine modification. The segment covering 255–265 (TGSNPSSSAGT) has biased composition (polar residues). The segment covering 268–282 (PEEEEEEEEEEEEEG) has biased composition (acidic residues). Threonine 328 is subject to Phosphothreonine. Residues 382–393 (PEIEEGEIVQPE) show a composition bias toward acidic residues. Residues 412–424 (PASVATLASVAAP) are compositionally biased toward low complexity. 2 positions are modified to phosphoserine: serine 442 and serine 447. Residues 478–489 (KILTQRRERYRQ) are compositionally biased toward basic residues. Residues serine 491, serine 493, serine 510, serine 518, and serine 520 each carry the phosphoserine modification. 2 stretches are compositionally biased toward basic residues: residues 538 to 553 (TARRRSRSRSRRRSRS) and 560 to 577 (RGGHRSRSREKRRRRRRS). Phosphoserine occurs at positions 577 and 579. Basic residues predominate over residues 592–611 (RERHRGKRREGGKKKKKRSR). Residues 612–623 (SRAEKRSGDLEK) are compositionally biased toward basic and acidic residues. Threonine 663 carries the post-translational modification Phosphothreonine. Phosphoserine occurs at positions 676 and 682. Tyrosine 689 carries the post-translational modification Phosphotyrosine. Residues serine 691 and serine 695 each carry the phosphoserine modification. Basic and acidic residues-rich tracts occupy residues 696–709 (ADERGGKSDKDRRR) and 719–741 (SREKGSRRKALDGDRGRDRDRSS). 2 stretches are compositionally biased toward low complexity: residues 752–775 (PGSGPLPKAPPSSGSSSSSSSCSS) and 793–804 (SSTTPAKDSSSS). Lysine 812 participates in a covalent cross-link: Glycyl lysine isopeptide (Lys-Gly) (interchain with G-Cter in SUMO2). Residues 813–831 (FSRDRESRSPFLKPDERAP) show a composition bias toward basic and acidic residues. Phosphoserine occurs at positions 819 and 821. Over residues 843–875 (KPKKTKAKAKAGAKKAKGTKGKTKPSKTRKKVR) the composition is skewed to basic residues. 4 positions are modified to phosphoserine: serine 876, serine 883, serine 910, and serine 912. The segment covering 922–935 (STPPPKVAPPPPAL) has biased composition (pro residues). Phosphothreonine is present on residues threonine 923 and threonine 936. Residues 938–947 (DSQTVDSSCK) are compositionally biased toward polar residues. A Phosphoserine modification is found at serine 939. Residue threonine 948 is modified to Phosphothreonine. Acidic residues predominate over residues 969 to 984 (EEEEEEEEEEEEEEEQ). Residues 985–1017 (QPATTTATSTAAAAPSTAPSAGSTAGDSGAEDG) show a composition bias toward low complexity. Residues 1131–1256 (PASDKREGSS…GGPGLPLPPL (126 aa)) form a necessary for interaction with the CTD domain of POLR2A region. A compositionally biased stretch (basic and acidic residues) spans 1133–1152 (SDKREGSSSSEGRGDTDKYL). The segment covering 1244–1256 (PDKGGPGLPLPPL) has biased composition (pro residues).

The protein belongs to the splicing factor SR family. In terms of assembly, interacts with POLR2A.

It is found in the nucleus. In terms of biological role, may function in pre-mRNA splicing. This Mus musculus (Mouse) protein is Splicing factor, arginine/serine-rich 19 (Scaf1).